The chain runs to 774 residues: Penicillin acylase 2 proenzyme (774 aa).

Serine 240 functions as the Nucleophile in the catalytic mechanism.

It belongs to the peptidase S45 family. As to quaternary structure, heterodimer of a small subunit and a large subunit processed from the same precursor.

It carries out the reaction a penicillin + H2O = 6-aminopenicillanate + a carboxylate. The protein is Penicillin acylase 2 proenzyme (acyII) of Pseudomonas sp. (strain SE83).